Reading from the N-terminus, the 64-residue chain is Large ribosomal subunit protein bL35 (64 aa).

Belongs to the bacterial ribosomal protein bL35 family.

The polypeptide is Large ribosomal subunit protein bL35 (Vibrio campbellii (strain ATCC BAA-1116)).